Reading from the N-terminus, the 286-residue chain is Shikimate dehydrogenase (NADP(+)) (286 aa).

Residues serine 20–serine 22 and serine 67 contribute to the shikimate site. Lysine 71 (proton acceptor) is an active-site residue. Residues asparagine 92 and aspartate 107 each contribute to the shikimate site. NADP(+) contacts are provided by residues glycine 131–alanine 135 and alanine 230. Tyrosine 232 serves as a coordination point for shikimate. Position 253 (glycine 253) interacts with NADP(+).

This sequence belongs to the shikimate dehydrogenase family. In terms of assembly, homodimer.

The enzyme catalyses shikimate + NADP(+) = 3-dehydroshikimate + NADPH + H(+). The protein operates within metabolic intermediate biosynthesis; chorismate biosynthesis; chorismate from D-erythrose 4-phosphate and phosphoenolpyruvate: step 4/7. Involved in the biosynthesis of the chorismate, which leads to the biosynthesis of aromatic amino acids. Catalyzes the reversible NADPH linked reduction of 3-dehydroshikimate (DHSA) to yield shikimate (SA). This chain is Shikimate dehydrogenase (NADP(+)), found in Lactococcus lactis subsp. cremoris (strain SK11).